The sequence spans 396 residues: Acetyl-CoA acetyltransferase ERG10, cytosolic (396 aa).

Cys91 functions as the Acyl-thioester intermediate in the catalytic mechanism. Tyr186 is a K(+) binding site. 2 residues coordinate CoA: Asn227 and Lys230. K(+) is bound by residues Ala246, Pro247, and Val347. Catalysis depends on proton acceptor residues His351 and Cys381. Chloride is bound at residue Asn382.

Belongs to the thiolase-like superfamily. Thiolase family. Homotetramer. K(+) is required as a cofactor.

The protein resides in the cytoplasm. Its subcellular location is the cytosol. It carries out the reaction 2 acetyl-CoA = acetoacetyl-CoA + CoA. It participates in metabolic intermediate biosynthesis; (R)-mevalonate biosynthesis; (R)-mevalonate from acetyl-CoA: step 1/3. Acetyl-CoA acetyltransferase; part of the first module of ergosterol biosynthesis pathway that includes the early steps of the pathway, conserved across all eukaryotes, and which results in the formation of mevalonate from acetyl-coenzyme A (acetyl-CoA). ERG10B catalyzes the formation of acetoacetyl-CoA from acetyl-CoA. The first module starts with the action of the cytosolic acetyl-CoA acetyltransferase ERG10B that catalyzes the formation of acetoacetyl-CoA. The hydroxymethylglutaryl-CoA synthases ERG13 then condenses acetyl-CoA with acetoacetyl-CoA to form HMG-CoA. The rate-limiting step of the early module is the reduction to mevalonate by the 3-hydroxy-3-methylglutaryl-coenzyme A (HMG-CoA) reductases HMG1. In Gibberella zeae (strain ATCC MYA-4620 / CBS 123657 / FGSC 9075 / NRRL 31084 / PH-1) (Wheat head blight fungus), this protein is Acetyl-CoA acetyltransferase ERG10, cytosolic.